Here is a 503-residue protein sequence, read N- to C-terminus: Protein phosphatase eya-1 (503 aa).

Catalysis depends on Asp-237, which acts as the Nucleophile. Asp-237 and Asp-239 together coordinate Mg(2+). Asp-239 functions as the Proton donor in the catalytic mechanism.

It belongs to the HAD-like hydrolase superfamily. EYA family. In terms of assembly, interacts (via C-terminus) with ceh-34 (via N-terminus). It depends on Mg(2+) as a cofactor. As to expression, expressed in body wall muscles. Expressed in BAG sensory neurons and in other head neurons.

The protein resides in the nucleus. It catalyses the reaction O-phospho-L-tyrosyl-[protein] + H2O = L-tyrosyl-[protein] + phosphate. Its function is as follows. Tyrosine protein phosphatase. Acts probably as a transcription regulator in the embryonic and postembryonic development of several tissues including pharynx, vulva and gonads. Required for the development of anterior tissues during late embryogenesis. Together with ceh-34, required to specify the coelomocyte fate in embryonic and postembryonic precursors. In the anterior part of the embryo, prevents apoptosis in cells that are not fated to die. Together with ceh-34 activates proapoptotic factor egl-1 expression to promote motor neuron M4 sister cell apoptosis. Also promotes apoptosis of I1 pharyngeal neuron sister cell. Plays a role in locomotion and fertility. May play a role in resistance to heat and oxidative stresses. May cooperate with the transcription factors vab-3 and ceh-32 to repress transcription factor ets-5 expression in non BAG neuronal cells. This chain is Protein phosphatase eya-1, found in Caenorhabditis elegans.